Reading from the N-terminus, the 341-residue chain is 3-keto-steroid reductase/17-beta-hydroxysteroid dehydrogenase 7 (341 aa).

Topologically, residues 1–229 (MRKVVLITGA…VACPGTALTN (229 aa)) are extracellular. 8 to 15 (TGASSGIG) contributes to the NAD(+) binding site. N-linked (GlcNAc...) asparagine glycosylation is present at asparagine 37. Serine 171 contributes to the substrate binding site. A glycan (N-linked (GlcNAc...) asparagine) is linked at asparagine 178. Residue tyrosine 193 is the Proton acceptor of the active site. An N-linked (GlcNAc...) asparagine glycan is attached at asparagine 229. Residues 230–250 (LTYGILPPFIWTLLMPAILLL) traverse the membrane as a helical segment. The Cytoplasmic portion of the chain corresponds to 251–341 (RFFANAFTLT…NQARLSGSCL (91 aa)).

Belongs to the short-chain dehydrogenases/reductases (SDR) family. ERG27 subfamily. As to quaternary structure, binds to the short form of prolactin receptor. In terms of processing, phosphorylated. Highly expressed in adrenal gland, liver, lung and thymus. Expressed in breast, ovaries, pituitary gland, pregnant uterus, prostate, kidney, lymph node, small intestine, spinal cord and trachea. Weakly expressed in all other tissues tested. As to expression, expressed in eye ciliary epithelial cells and neuroendocrine cells.

It localises to the endoplasmic reticulum membrane. It catalyses the reaction 17beta-estradiol + NADP(+) = estrone + NADPH + H(+). It carries out the reaction a 3beta-hydroxysteroid + NADP(+) = a 3-oxosteroid + NADPH + H(+). The catalysed reaction is 3-dehydro-4alpha-methylzymosterol + NADPH + H(+) = 4alpha-methylzymosterol + NADP(+). The enzyme catalyses zymosterone + NADPH + H(+) = zymosterol + NADP(+). It catalyses the reaction 4alpha-methyl-5alpha-cholest-8-en-3-one + NADPH + H(+) = 4alpha-methyl-5alpha-cholest-8-en-3beta-ol + NADP(+). It carries out the reaction 4alpha-methyl-5alpha-cholest-7-en-3beta-ol + NADP(+) = 4alpha-methyl-5alpha-cholest-7-en-3-one + NADPH + H(+). The catalysed reaction is 5alpha-cholest-8-en-3-one + NADPH + H(+) = 5alpha-cholest-8-en-3beta-ol + NADP(+). The enzyme catalyses 5alpha-androstane-3beta,17beta-diol + NADP(+) = 17beta-hydroxy-5alpha-androstan-3-one + NADPH + H(+). It catalyses the reaction progesterone + NADPH + H(+) = 3beta-hydroxypregn-4-ene-20-one + NADP(+). Its pathway is steroid biosynthesis; estrogen biosynthesis. It functions in the pathway steroid biosynthesis; zymosterol biosynthesis; zymosterol from lanosterol: step 5/6. Estradiol 17-beta-dehydrogenase and dihydrotestosterone oxidoreductase activities are selectively inhibited by 4-methyl-4-aza-5alpha-androstane derivatives, such as 17beta-[(N-Heptyl)methylamino]-4-aza-5r-androstan-3-one and 17beta-(N-Decylformamido)-4-aza-5r-androstan-3-one. Its function is as follows. Bifunctional enzyme involved in steroid-hormone metabolism and cholesterol biosynthesis. Catalyzes the NADP(H)-dependent reduction of estrogens and androgens and regulates the biological potency of these steroids. Converts estrone (E1) to a more potent estrogen, 17beta-estradiol (E2). Converts dihydrotestosterone (DHT) to its inactive form 5a-androstane-3b,17b-diol. Converts moderately progesterone to 3beta-hydroxypregn-4-ene-20-one, leading to its inactivation. Additionally, participates in the post-squalene cholesterol biosynthesis, as a 3-ketosteroid reductase. Functionally, does not have enzymatic activities toward E1 and DHT. The sequence is that of 3-keto-steroid reductase/17-beta-hydroxysteroid dehydrogenase 7 (HSD17B7) from Homo sapiens (Human).